The primary structure comprises 152 residues: Cytochrome c-type biogenesis protein CcmE (152 aa).

Topologically, residues 1–8 are cytoplasmic; sequence MQARRKTR. Residues 9 to 29 form a helical; Signal-anchor for type II membrane protein membrane-spanning segment; it reads LYIVLAVLAGLGLTVSLTLYA. Topologically, residues 30 to 152 are periplasmic; that stretch reads LSSNIDLFYT…MTPEKTGAQP (123 aa). 2 residues coordinate heme: H130 and Y134. The disordered stretch occupies residues 133-152; it reads NYTPPEVKNAMTPEKTGAQP.

The protein belongs to the CcmE/CycJ family.

Its subcellular location is the cell inner membrane. Heme chaperone required for the biogenesis of c-type cytochromes. Transiently binds heme delivered by CcmC and transfers the heme to apo-cytochromes in a process facilitated by CcmF and CcmH. This chain is Cytochrome c-type biogenesis protein CcmE, found in Klebsiella pneumoniae (strain 342).